The primary structure comprises 602 residues: MKPYKIENIRNFSIIAHIDHGKSTIADRLLESTSTIEQREMREQLLDSMDLERERGITIKAHPVTMTYEYEGETYELNLIDTPGHVDFSYEVSRSLAACEGALLIVDAAQGVQAQSLANVYLALERDLEIIPVLNKIDLPAAQPEAIKKQIEEFIGLDTSNTIACSAKTGQGIPEILESIIRLVPPPKPPQETELKALIFDSHYDPYVGIMVYVRVISGEIKKGDRITFMATKGSSFEVLGIGAFLPEATLMEGSLRAGQVGYFIANLKKVKDVKIGDTVTTVKHPAKEPLEGFKEIKPVVFAGIYPIDSSDFDTLKDALGRLQLNDSALTIEQENSHSLGFGFRCGFLGLLHLEIIFERISREFDLDIIATAPSVIYKVVLKNGKTLFIDNPTAYPDPALIEHMEEPWVHVNIITPQEYLSNIMSLCMDKRGICLKTDMLDQHRLVLSYELPLNEIVSDFNDKLKSVTKGYGSFDYRLGDYKKGAIIKLEILINDEAVDAFSCLVHRDKAESKGRSICEKLVDVIPPQLFKIPIQAAINKKIIARETIRALAKNVTAKCYGGDITRKRKLWDKQKKGKKRMKEFGKVSIPNTAFVEVLKME.

Residues 7 to 188 form the tr-type G domain; sequence ENIRNFSIIA…SIIRLVPPPK (182 aa). Residues 19–24 and 135–138 each bind GTP; these read DHGKST and NKID.

This sequence belongs to the TRAFAC class translation factor GTPase superfamily. Classic translation factor GTPase family. LepA subfamily.

Its subcellular location is the cell inner membrane. The enzyme catalyses GTP + H2O = GDP + phosphate + H(+). Required for accurate and efficient protein synthesis under certain stress conditions. May act as a fidelity factor of the translation reaction, by catalyzing a one-codon backward translocation of tRNAs on improperly translocated ribosomes. Back-translocation proceeds from a post-translocation (POST) complex to a pre-translocation (PRE) complex, thus giving elongation factor G a second chance to translocate the tRNAs correctly. Binds to ribosomes in a GTP-dependent manner. In Chlamydia trachomatis serovar D (strain ATCC VR-885 / DSM 19411 / UW-3/Cx), this protein is Elongation factor 4.